Consider the following 827-residue polypeptide: Centrosomal protein of 95 kDa (827 aa).

Disordered regions lie at residues 115-145 (ISESSPNKSETEQYSKDSHGEEAGEDLERTE), 183-249 (GDTA…MVPS), 308-372 (FLTS…MSEK), 388-476 (LGDR…DSCH), and 489-558 (ELRK…KASP). A compositionally biased stretch (basic and acidic residues) spans 123 to 145 (SETEQYSKDSHGEEAGEDLERTE). Positions 187 to 199 (HTFSQRSNGAQNS) are enriched in polar residues. Basic and acidic residues-rich tracts occupy residues 327–343 (EATRTRKPSKGERDENR) and 360–372 (PLTEQELHAMSEK). Ser-447, Ser-449, and Ser-451 each carry phosphoserine. Coiled-coil stretches lie at residues 584-633 (LTKM…VKKE) and 701-795 (LQIQ…DDDA).

The protein resides in the cytoplasm. It localises to the cytoskeleton. The protein localises to the microtubule organizing center. It is found in the centrosome. Its subcellular location is the spindle pole. This chain is Centrosomal protein of 95 kDa (Cep95), found in Mus musculus (Mouse).